Here is a 142-residue protein sequence, read N- to C-terminus: ATP synthase epsilon chain (142 aa).

It belongs to the ATPase epsilon chain family. In terms of assembly, F-type ATPases have 2 components, CF(1) - the catalytic core - and CF(0) - the membrane proton channel. CF(1) has five subunits: alpha(3), beta(3), gamma(1), delta(1), epsilon(1). CF(0) has three main subunits: a, b and c.

It is found in the cell inner membrane. Its function is as follows. Produces ATP from ADP in the presence of a proton gradient across the membrane. The chain is ATP synthase epsilon chain from Shewanella baltica (strain OS155 / ATCC BAA-1091).